We begin with the raw amino-acid sequence, 223 residues long: Transcriptional regulator HMO1 (223 aa).

Disordered regions lie at residues 69–89 (IEAT…APKK) and 165–223 (DGSA…HGSP). The segment covering 70 to 86 (EATESKKKRKQEKDPNA) has biased composition (basic and acidic residues). A DNA-binding region (HMG box) is located at residues 87–160 (PKKPLTMFFQ…IYNIEKKKYE (74 aa)). The span at 204–223 (KKKKKTEKKEKKKKSGHGSP) shows a compositional bias: basic residues.

The protein localises to the nucleus. Functionally, transcription factor that binds upstream of hexose and ergosterol metabolism, as well as cell cycle genes. Activates pseudohyphal growth. This chain is Transcriptional regulator HMO1 (HMO1), found in Candida albicans (strain SC5314 / ATCC MYA-2876) (Yeast).